Consider the following 267-residue polypeptide: 2-keto-3-deoxy-L-rhamnonate aldolase (267 aa).

H49 (proton acceptor) is an active-site residue. Q151 lines the substrate pocket. E153 is a binding site for Mg(2+). Substrate is bound by residues A178 and D179. Mg(2+) is bound at residue D179.

Belongs to the HpcH/HpaI aldolase family. KDR aldolase subfamily. As to quaternary structure, homohexamer. The cofactor is Mg(2+).

It carries out the reaction 2-dehydro-3-deoxy-L-rhamnonate = (S)-lactaldehyde + pyruvate. Its function is as follows. Catalyzes the reversible retro-aldol cleavage of 2-keto-3-deoxy-L-rhamnonate (KDR) to pyruvate and lactaldehyde. The sequence is that of 2-keto-3-deoxy-L-rhamnonate aldolase from Salmonella paratyphi A (strain ATCC 9150 / SARB42).